A 323-amino-acid chain; its full sequence is Aldo-keto reductase family 1 member C1 (323 aa).

NADP(+)-binding positions include 20-24 (GFGTY) and Asp50. Tyr24 is a substrate binding site. Tyr55 (proton donor) is an active-site residue. His117 provides a ligand contact to substrate. Residues 166–167 (SN), Gln190, and 216–222 (YSALGSH) contribute to the NADP(+) site. Residues His222 and Trp227 each contribute to the substrate site. 270–280 (KSYNEQRIRQN) is an NADP(+) binding site.

It belongs to the aldo/keto reductase family. In terms of assembly, monomer.

The protein resides in the cytoplasm. The protein localises to the cytosol. The catalysed reaction is a 3alpha-hydroxysteroid + NADP(+) = a 3-oxosteroid + NADPH + H(+). The enzyme catalyses a 3alpha-hydroxysteroid + NAD(+) = a 3-oxosteroid + NADH + H(+). It carries out the reaction (17R,20S)-17,20-dihydroxypregn-4-en-3-one + NADP(+) = 17alpha-hydroxyprogesterone + NADPH + H(+). It catalyses the reaction (17R,20S)-17,20-dihydroxypregn-4-en-3-one + NAD(+) = 17alpha-hydroxyprogesterone + NADH + H(+). The catalysed reaction is (20S)-hydroxypregn-4-en-3-one + NADP(+) = progesterone + NADPH + H(+). The enzyme catalyses (20S)-hydroxypregn-4-en-3-one + NAD(+) = progesterone + NADH + H(+). It carries out the reaction (1R,2R)-1,2-dihydrobenzene-1,2-diol + NADP(+) = catechol + NADPH + H(+). It catalyses the reaction (S)-indan-1-ol + NAD(+) = indan-1-one + NADH + H(+). The catalysed reaction is (S)-indan-1-ol + NADP(+) = indan-1-one + NADPH + H(+). The enzyme catalyses 5alpha-androstane-3alpha,17beta-diol + NADP(+) = 17beta-hydroxy-5alpha-androstan-3-one + NADPH + H(+). It carries out the reaction 5alpha-androstane-3beta,17beta-diol + NADP(+) = 17beta-hydroxy-5alpha-androstan-3-one + NADPH + H(+). It catalyses the reaction 5alpha-androstane-3alpha,17beta-diol + NAD(+) = 17beta-hydroxy-5alpha-androstan-3-one + NADH + H(+). The catalysed reaction is 17beta-hydroxy-5alpha-androstan-3-one + NADP(+) = 5alpha-androstan-3,17-dione + NADPH + H(+). The enzyme catalyses androsterone + NADP(+) = 5alpha-androstan-3,17-dione + NADPH + H(+). It carries out the reaction androsterone + NADPH + H(+) = 5alpha-androstane-3alpha,17beta-diol + NADP(+). It catalyses the reaction 5alpha-androstane-3alpha,17beta-diol + NAD(+) = androsterone + NADH + H(+). The catalysed reaction is 17beta-estradiol + NADP(+) = estrone + NADPH + H(+). The enzyme catalyses 17beta-estradiol + NAD(+) = estrone + NADH + H(+). It carries out the reaction testosterone + NADP(+) = androst-4-ene-3,17-dione + NADPH + H(+). It catalyses the reaction 20alpha-hydroxy-5beta-pregnan-3-one + NADP(+) = 5beta-pregnan-3,20-dione + NADPH + H(+). The catalysed reaction is 3beta-hydroxy-5beta-pregnane-20-one + NADP(+) = 5beta-pregnan-3,20-dione + NADPH + H(+). The enzyme catalyses 3beta-hydroxy-5beta-pregnane-20-one + NADPH + H(+) = 3beta,20alpha-dihydroxy-5beta-pregnane + NADP(+). It carries out the reaction (3beta,5alpha,17beta)-3-hydroxyandrostan-17-yl sulfate + NADP(+) = 5alpha-dihydrotestosterone sulfate + NADPH + H(+). It functions in the pathway steroid metabolism. Cytosolic aldo-keto reductase that catalyzes the NADH and NADPH-dependent reduction of ketosteroids to hydroxysteroids. Most probably acts as a reductase in vivo since the oxidase activity measured in vitro is inhibited by physiological concentrations of NADPH. Displays a broad positional specificity acting on positions 3, 17 and 20 of steroids and regulates the metabolism of hormones like estrogens and androgens. May also reduce conjugated steroids such as 5alpha-dihydrotestosterone sulfate. Displays affinity for bile acids. The sequence is that of Aldo-keto reductase family 1 member C1 (AKR1C1) from Pongo abelii (Sumatran orangutan).